Consider the following 266-residue polypeptide: Elongation factor Ts (266 aa).

Positions 80–83 are involved in Mg(2+) ion dislocation from EF-Tu; the sequence is TDFV.

Belongs to the EF-Ts family.

It localises to the cytoplasm. Associates with the EF-Tu.GDP complex and induces the exchange of GDP to GTP. It remains bound to the aminoacyl-tRNA.EF-Tu.GTP complex up to the GTP hydrolysis stage on the ribosome. The chain is Elongation factor Ts from Buchnera aphidicola subsp. Baizongia pistaciae (strain Bp).